We begin with the raw amino-acid sequence, 419 residues long: Probable pectate lyase C (419 aa).

An N-terminal signal peptide occupies residues 1–19 (MRLTPSLISCLSLLHFTSA). N-linked (GlcNAc...) asparagine glycosylation is found at Asn48, Asn164, and Asn201. The active site involves Arg204. The 36-residue stretch at 261 to 296 (NENFHAYVETNYYDSDKDGTLNGSELGVDSTNYGGM) folds into the EF-hand domain. Asp274, Asp276, Asp278, and Thr280 together coordinate Ca(2+). Asn282 carries N-linked (GlcNAc...) asparagine glycosylation. Glu285 provides a ligand contact to Ca(2+). Residues 352 to 395 (ISDEADMGGAGDLDQGTTPTDTDGDGIPDDAEAELGTDPNTADS) form a disordered region. Residues 363-372 (DLDQGTTPTD) are compositionally biased toward low complexity. The span at 373–386 (TDGDGIPDDAEAEL) shows a compositional bias: acidic residues.

The protein belongs to the polysaccharide lyase 1 family. It depends on Ca(2+) as a cofactor.

Its subcellular location is the secreted. The catalysed reaction is Eliminative cleavage of (1-&gt;4)-alpha-D-galacturonan to give oligosaccharides with 4-deoxy-alpha-D-galact-4-enuronosyl groups at their non-reducing ends.. Functionally, pectinolytic enzyme consist of four classes of enzymes: pectin lyase, polygalacturonase, pectin methylesterase and rhamnogalacturonase. Among pectinolytic enzymes, pectin lyase is the most important in depolymerization of pectin, since it cleaves internal glycosidic bonds of highly methylated pectins. Favors pectate, the anion, over pectin, the methyl ester. This is Probable pectate lyase C (plyC) from Aspergillus oryzae (strain ATCC 42149 / RIB 40) (Yellow koji mold).